Reading from the N-terminus, the 751-residue chain is Catalase-peroxidase (751 aa).

Residues 1–21 (MSNESKCPFHQTAGGGTTNRD) are disordered. The segment at residues 90-244 (WHSAGTYRIG…LAAVQMGLIY (155 aa)) is a cross-link (tryptophyl-tyrosyl-methioninium (Trp-Tyr) (with M-270)). Histidine 91 functions as the Proton acceptor in the catalytic mechanism. The interval 195 to 227 (YGKDQVKAQPPGQGDLVAEPAKHGEEQNRDLSA) is disordered. Residues 214-227 (PAKHGEEQNRDLSA) show a composition bias toward basic and acidic residues. Positions 244–270 (YVNPEGPEGNPDPVASGKDIRETFGRM) form a cross-link, tryptophyl-tyrosyl-methioninium (Tyr-Met) (with W-90). Histidine 285 provides a ligand contact to heme b. Residues 364–385 (GAHQWRPKDGKGAGTVPDAHDP) form a disordered region.

Belongs to the peroxidase family. Peroxidase/catalase subfamily. In terms of assembly, homodimer or homotetramer. The cofactor is heme b. Formation of the three residue Trp-Tyr-Met cross-link is important for the catalase, but not the peroxidase activity of the enzyme.

It catalyses the reaction H2O2 + AH2 = A + 2 H2O. It carries out the reaction 2 H2O2 = O2 + 2 H2O. Bifunctional enzyme with both catalase and broad-spectrum peroxidase activity. The chain is Catalase-peroxidase from Pseudomonas putida (strain ATCC 47054 / DSM 6125 / CFBP 8728 / NCIMB 11950 / KT2440).